Here is an 86-residue protein sequence, read N- to C-terminus: Sec-independent protein translocase protein TatA (86 aa).

A helical membrane pass occupies residues Met-1–Gly-21. Residues Ala-42–Val-86 form a disordered region. Composition is skewed to polar residues over residues Asn-47–Asp-58 and Glu-68–Thr-77.

It belongs to the TatA/E family. In terms of assembly, the Tat system comprises two distinct complexes: a TatABC complex, containing multiple copies of TatA, TatB and TatC subunits, and a separate TatA complex, containing only TatA subunits. Substrates initially bind to the TatABC complex, which probably triggers association of the separate TatA complex to form the active translocon.

It is found in the cell inner membrane. Its function is as follows. Part of the twin-arginine translocation (Tat) system that transports large folded proteins containing a characteristic twin-arginine motif in their signal peptide across membranes. TatA could form the protein-conducting channel of the Tat system. The polypeptide is Sec-independent protein translocase protein TatA (Photorhabdus laumondii subsp. laumondii (strain DSM 15139 / CIP 105565 / TT01) (Photorhabdus luminescens subsp. laumondii)).